Reading from the N-terminus, the 125-residue chain is Fluoride-specific ion channel FluC (125 aa).

4 consecutive transmembrane segments (helical) span residues 5-25, 37-57, 71-91, and 97-117; these read ILAI…LALW, LAAN…FHLL, GFLG…TMLL, and VALL…WLGI. Gly-74 and Thr-77 together coordinate Na(+).

The protein belongs to the fluoride channel Fluc/FEX (TC 1.A.43) family.

The protein resides in the cell inner membrane. The catalysed reaction is fluoride(in) = fluoride(out). Na(+) is not transported, but it plays an essential structural role and its presence is essential for fluoride channel function. Its function is as follows. Fluoride-specific ion channel. Important for reducing fluoride concentration in the cell, thus reducing its toxicity. The polypeptide is Fluoride-specific ion channel FluC (Variovorax paradoxus (strain S110)).